The following is a 352-amino-acid chain: MSKQPSISYKDAGVDIDAGEALVERIKGVAKRTARPEVMGGLGGFGALCEIPAGYKQPVLVSGTDGVGTKLRLALNLNKHDSIGQDLVAMCVNDLVVCGAEPLFFLDYYATGKLNVDVAATVVTGIGAGCELAGCSLVGGETAEMPGMYEGEDYDLAGFCVGVVEKSEIIDGSKVATGDALIALPSSGPHSNGYSLIRKIIEVSGADIEQVQLDGKALADLLMAPTRIYVKPLLKLIKDTGAVKAMAHITGGGLLDNIPRVLPQGAQAVIDVASWNRPAVFDWLQEKGNVDEHEMHRVLNCGVGMVICVAQDQVEAALASLRASGESPWVIGQIAEAAEGAAQVQLNNLKTH.

It belongs to the AIR synthase family.

The protein localises to the cytoplasm. The catalysed reaction is 2-formamido-N(1)-(5-O-phospho-beta-D-ribosyl)acetamidine + ATP = 5-amino-1-(5-phospho-beta-D-ribosyl)imidazole + ADP + phosphate + H(+). It participates in purine metabolism; IMP biosynthesis via de novo pathway; 5-amino-1-(5-phospho-D-ribosyl)imidazole from N(2)-formyl-N(1)-(5-phospho-D-ribosyl)glycinamide: step 2/2. This is Phosphoribosylformylglycinamidine cyclo-ligase from Ectopseudomonas mendocina (strain ymp) (Pseudomonas mendocina).